The following is a 566-amino-acid chain: MDIKRIILYVIVALLAIALFNAWQRDYPPTPKPTPTVEQPTANGDHPTAYTPPAFTPGAAEKTKKAGTIALTSKVPEARLITVRTDVLDVEIDTQGGNIVSAKLPKYPVSLEEKQTPVQILSGEPNELYVAQSGLTNGNGQPTTVQFESAKKQYVLENGQNQLIVQLTGRAPDGLLVTKTYTFHRDDYAIHLAYQVKNNTSKPWQGSLYTQITRRQPPTEHHHFYVRSYNGASMGSPQTPYEKLSYESLDKQNIDRTSQSGWIAMQQHYFLSAWVPGNPELTYHYYSHVIPASGEPNVYVVGFVSPQMNVAAGSEAATHATLYVGPEIAKRLKGLAPGLERTIDYGWLWPISMLLFWILSSVHAVVKNWGWSIIITTILIKIVFYWFSAKSFRSMARMREMQPRIQALKERHGDDRQALSRATMELYRKEKINPLGGCLPMLIQVPVFIAFYYVIIESVQLRQAPFIFWIHDLSVKDPYYILPIIMGLSMLAQQWLSPTSPDPTQQKMMWILPVIFTVFFINFPAGLVLYWITNNVVQTLQQWYVNKTYESHKAKLKARRARKRKR.

Helical transmembrane passes span 3-23 (IKRI…FNAW), 346-366 (GWLW…HAVV), 369-389 (WGWS…WFSA), 436-456 (GGCL…YVII), and 509-529 (MWIL…GLVL).

This sequence belongs to the OXA1/ALB3/YidC family. Type 1 subfamily. Interacts with the Sec translocase complex via SecD. Specifically interacts with transmembrane segments of nascent integral membrane proteins during membrane integration.

The protein localises to the cell inner membrane. Required for the insertion and/or proper folding and/or complex formation of integral membrane proteins into the membrane. Involved in integration of membrane proteins that insert both dependently and independently of the Sec translocase complex, as well as at least some lipoproteins. Aids folding of multispanning membrane proteins. The polypeptide is Membrane protein insertase YidC (Coxiella burnetii (strain Dugway 5J108-111)).